The following is a 129-amino-acid chain: Large ribosomal subunit protein bL17 (129 aa).

Belongs to the bacterial ribosomal protein bL17 family. Part of the 50S ribosomal subunit. Contacts protein L32.

In Desulfotalea psychrophila (strain LSv54 / DSM 12343), this protein is Large ribosomal subunit protein bL17.